The sequence spans 382 residues: Putative acetyl-CoA C-acetyltransferase VraB (382 aa).

C86 (acyl-thioester intermediate) is an active-site residue. H338 functions as the Proton acceptor in the catalytic mechanism.

This sequence belongs to the thiolase-like superfamily. Thiolase family.

The protein is Putative acetyl-CoA C-acetyltransferase VraB (vraB) of Staphylococcus epidermidis (strain ATCC 35984 / DSM 28319 / BCRC 17069 / CCUG 31568 / BM 3577 / RP62A).